Consider the following 434-residue polypeptide: Serine--tRNA ligase (434 aa).

241–243 (TAE) is an L-serine binding site. 272-274 (RSE) serves as a coordination point for ATP. Glu-295 is a binding site for L-serine. 359-362 (EISS) is a binding site for ATP. An L-serine-binding site is contributed by Ser-395.

Belongs to the class-II aminoacyl-tRNA synthetase family. Type-1 seryl-tRNA synthetase subfamily. As to quaternary structure, homodimer. The tRNA molecule binds across the dimer.

The protein resides in the cytoplasm. It carries out the reaction tRNA(Ser) + L-serine + ATP = L-seryl-tRNA(Ser) + AMP + diphosphate + H(+). It catalyses the reaction tRNA(Sec) + L-serine + ATP = L-seryl-tRNA(Sec) + AMP + diphosphate + H(+). It participates in aminoacyl-tRNA biosynthesis; selenocysteinyl-tRNA(Sec) biosynthesis; L-seryl-tRNA(Sec) from L-serine and tRNA(Sec): step 1/1. Its function is as follows. Catalyzes the attachment of serine to tRNA(Ser). Is also able to aminoacylate tRNA(Sec) with serine, to form the misacylated tRNA L-seryl-tRNA(Sec), which will be further converted into selenocysteinyl-tRNA(Sec). This Glaesserella parasuis serovar 5 (strain SH0165) (Haemophilus parasuis) protein is Serine--tRNA ligase.